Reading from the N-terminus, the 153-residue chain is UPF0311 protein RPA1785 (153 aa).

This sequence belongs to the UPF0311 family.

The polypeptide is UPF0311 protein RPA1785 (Rhodopseudomonas palustris (strain ATCC BAA-98 / CGA009)).